Reading from the N-terminus, the 106-residue chain is UPF0145 protein CLH_2273 (106 aa).

The protein belongs to the UPF0145 family.

The chain is UPF0145 protein CLH_2273 from Clostridium botulinum (strain Alaska E43 / Type E3).